The following is a 205-amino-acid chain: Holliday junction branch migration complex subunit RuvA (205 aa).

The domain I stretch occupies residues 1–64 (MIGHIQGVLT…EDAQLLYGFI (64 aa)). Residues 65–143 (SASERSLFRL…DWQPSTPFTD (79 aa)) are domain II. The tract at residues 136-157 (QPSTPFTDRAPLDSQGMDAREH) is disordered. The flexible linker stretch occupies residues 144–156 (RAPLDSQGMDARE). A domain III region spans residues 157-205 (HPADARTDAISALQSLGYKENQAEKALQKVYSAEHNSETLIRLALKQLS).

Belongs to the RuvA family. As to quaternary structure, homotetramer. Forms an RuvA(8)-RuvB(12)-Holliday junction (HJ) complex. HJ DNA is sandwiched between 2 RuvA tetramers; dsDNA enters through RuvA and exits via RuvB. An RuvB hexamer assembles on each DNA strand where it exits the tetramer. Each RuvB hexamer is contacted by two RuvA subunits (via domain III) on 2 adjacent RuvB subunits; this complex drives branch migration. In the full resolvosome a probable DNA-RuvA(4)-RuvB(12)-RuvC(2) complex forms which resolves the HJ.

It localises to the cytoplasm. Functionally, the RuvA-RuvB-RuvC complex processes Holliday junction (HJ) DNA during genetic recombination and DNA repair, while the RuvA-RuvB complex plays an important role in the rescue of blocked DNA replication forks via replication fork reversal (RFR). RuvA specifically binds to HJ cruciform DNA, conferring on it an open structure. The RuvB hexamer acts as an ATP-dependent pump, pulling dsDNA into and through the RuvAB complex. HJ branch migration allows RuvC to scan DNA until it finds its consensus sequence, where it cleaves and resolves the cruciform DNA. This chain is Holliday junction branch migration complex subunit RuvA, found in Idiomarina loihiensis (strain ATCC BAA-735 / DSM 15497 / L2-TR).